The chain runs to 274 residues: Thiamine kinase (274 aa).

The protein belongs to the thiamine kinase family.

The catalysed reaction is thiamine + ATP = thiamine phosphate + ADP + H(+). It functions in the pathway cofactor biosynthesis; thiamine diphosphate biosynthesis; thiamine phosphate from thiamine: step 1/1. Its function is as follows. Catalyzes the ATP-dependent phosphorylation of thiamine to thiamine phosphate. Is involved in thiamine salvage. This is Thiamine kinase from Escherichia coli O6:K15:H31 (strain 536 / UPEC).